Here is a 236-residue protein sequence, read N- to C-terminus: Small ribosomal subunit protein uS3 (236 aa).

The KH type-2 domain maps to 39–107 (IREILHKELK…DVVINIVEIR (69 aa)). The segment at 213–236 (MAQDKRMNEGGGESPSPRSRRDAA) is disordered.

Belongs to the universal ribosomal protein uS3 family. Part of the 30S ribosomal subunit. Forms a tight complex with proteins S10 and S14.

In terms of biological role, binds the lower part of the 30S subunit head. Binds mRNA in the 70S ribosome, positioning it for translation. In Bradyrhizobium sp. (strain ORS 278), this protein is Small ribosomal subunit protein uS3.